We begin with the raw amino-acid sequence, 357 residues long: Protein-arginine kinase (357 aa).

Residues 24–256 enclose the Phosphagen kinase C-terminal domain; sequence VIISSRVRLA…LQLVTQERAA (233 aa). Residues 27–31, histidine 93, arginine 127, 178–182, and 209–214 contribute to the ATP site; these read SSRVR, RASVM, and RGLYGE. Positions 339–344 match the RDXXRA motif of the pArg binding pocket involved in allosteric regulation motif; that stretch reads RDIFRA.

It belongs to the ATP:guanido phosphotransferase family.

It carries out the reaction L-arginyl-[protein] + ATP = N(omega)-phospho-L-arginyl-[protein] + ADP + H(+). With respect to regulation, appears to be allosterically activated by the binding of pArg-containing polypeptides to the pArg-binding pocket localized in the C-terminal domain of McsB. Catalyzes the specific phosphorylation of arginine residues in proteins. This is Protein-arginine kinase from Desulforamulus reducens (strain ATCC BAA-1160 / DSM 100696 / MI-1) (Desulfotomaculum reducens).